Here is a 395-residue protein sequence, read N- to C-terminus: Putative 8-amino-7-oxononanoate synthase (395 aa).

Arginine 23 contacts substrate. 110 to 111 (GY) serves as a coordination point for pyridoxal 5'-phosphate. A substrate-binding site is contributed by histidine 135. Pyridoxal 5'-phosphate contacts are provided by residues serine 181, 206–209 (DEAH), and 237–240 (TFSK). Lysine 240 is modified (N6-(pyridoxal phosphate)lysine). Threonine 354 contributes to the substrate binding site.

The protein belongs to the class-II pyridoxal-phosphate-dependent aminotransferase family. BioF subfamily. In terms of assembly, homodimer. The cofactor is pyridoxal 5'-phosphate.

It carries out the reaction 6-carboxyhexanoyl-[ACP] + L-alanine + H(+) = (8S)-8-amino-7-oxononanoate + holo-[ACP] + CO2. It functions in the pathway cofactor biosynthesis; biotin biosynthesis. Its function is as follows. Catalyzes the decarboxylative condensation of pimeloyl-[acyl-carrier protein] and L-alanine to produce 8-amino-7-oxononanoate (AON), [acyl-carrier protein], and carbon dioxide. The sequence is that of Putative 8-amino-7-oxononanoate synthase (bioF) from Halalkalibacterium halodurans (strain ATCC BAA-125 / DSM 18197 / FERM 7344 / JCM 9153 / C-125) (Bacillus halodurans).